A 38-amino-acid polypeptide reads, in one-letter code: Large ribosomal subunit protein bL36 (38 aa).

The protein belongs to the bacterial ribosomal protein bL36 family.

This Ralstonia nicotianae (strain ATCC BAA-1114 / GMI1000) (Ralstonia solanacearum) protein is Large ribosomal subunit protein bL36.